A 417-amino-acid chain; its full sequence is Indole-3-pyruvate monooxygenase YUCCA6 (417 aa).

36–41 contributes to the FAD binding site; sequence GAGPSG. NADP(+) is bound at residue 204 to 209; that stretch reads GCGNSG.

It belongs to the FMO family. FAD is required as a cofactor. Highly expressed in roots but modestly expressed in the cauline leaves and flowers. Expressed in anthers.

The protein localises to the cytoplasm. The enzyme catalyses indole-3-pyruvate + NADPH + O2 + H(+) = (indol-3-yl)acetate + CO2 + NADP(+) + H2O. It functions in the pathway plant hormone metabolism; auxin biosynthesis. In terms of biological role, involved in auxin biosynthesis via the indole-3-pyruvic acid (IPA) pathway. Also able to convert in vitro phenyl pyruvate (PPA) to phenyl acetic acid (PAA). Required for the formation of floral organs and vascular tissues. Belongs to the set of redundant YUCCA genes probably responsible for auxin biosynthesis in shoots. The protein is Indole-3-pyruvate monooxygenase YUCCA6 (YUC6) of Arabidopsis thaliana (Mouse-ear cress).